The following is a 217-amino-acid chain: ATP phosphoribosyltransferase (217 aa).

The protein belongs to the ATP phosphoribosyltransferase family. Short subfamily. In terms of assembly, heteromultimer composed of HisG and HisZ subunits.

Its subcellular location is the cytoplasm. The enzyme catalyses 1-(5-phospho-beta-D-ribosyl)-ATP + diphosphate = 5-phospho-alpha-D-ribose 1-diphosphate + ATP. The protein operates within amino-acid biosynthesis; L-histidine biosynthesis; L-histidine from 5-phospho-alpha-D-ribose 1-diphosphate: step 1/9. In terms of biological role, catalyzes the condensation of ATP and 5-phosphoribose 1-diphosphate to form N'-(5'-phosphoribosyl)-ATP (PR-ATP). Has a crucial role in the pathway because the rate of histidine biosynthesis seems to be controlled primarily by regulation of HisG enzymatic activity. The chain is ATP phosphoribosyltransferase from Synechococcus sp. (strain WH7803).